Here is a 128-residue protein sequence, read N- to C-terminus: Con-Ins F2c (128 aa).

An N-terminal signal peptide occupies residues 1–24 (MTTSSYFLLVALGLLLYVCRSSFG). Intrachain disulfides connect Cys-29-Cys-104, Cys-41-Cys-107, Cys-53-Cys-120, and Cys-106-Cys-111. The propeptide at 59 to 89 (LQGGTGKKRGRASLLRKRRAFLSMLKARAKR) is c peptide. Glu-115 is subject to 4-carboxyglutamate; partial. Serine amide is present on Ser-127.

The protein belongs to the insulin family. In terms of assembly, heterodimer of A and B chains; disulfide-linked. Expressed by the venom gland.

The protein localises to the secreted. Functionally, this venom insulin facilitates prey capture by rapidly inducing hypoglycemic shock. Intraperitoneal injection of this peptide into zebrafish lowers blood glucose with the same potency than human insulin. In vivo, when applied to water, this peptide reduces overall locomotor activity of zebrafish larvae, observed as a significant decrease in the percentage of time spent swimming and movement frequency. The chain is Con-Ins F2c from Conus floridulus (Cone snail).